Here is a 174-residue protein sequence, read N- to C-terminus: MQQSEQIVVGRIGAVYGVKGWLKVQSFTDDPESIFEYSPWLLSQKTEREMKVVEWRRHNNGLIARLEGISDRDEAARLTGADICITADELPALADDEFYWRDLIGMRVVNTNGYDMGVVEQIMPTASNDVLVVKANSNDGFGKSERLIPFIQSEYVTAVDKEAKQIQVEWPSDF.

The PRC barrel domain maps to 95–174 (DDEFYWRDLI…QIQVEWPSDF (80 aa)).

Belongs to the RimM family. As to quaternary structure, binds ribosomal protein uS19.

The protein localises to the cytoplasm. In terms of biological role, an accessory protein needed during the final step in the assembly of 30S ribosomal subunit, possibly for assembly of the head region. Essential for efficient processing of 16S rRNA. May be needed both before and after RbfA during the maturation of 16S rRNA. It has affinity for free ribosomal 30S subunits but not for 70S ribosomes. The sequence is that of Ribosome maturation factor RimM from Idiomarina loihiensis (strain ATCC BAA-735 / DSM 15497 / L2-TR).